The chain runs to 302 residues: Oxygen-dependent coproporphyrinogen-III oxidase (302 aa).

Ser-94 contributes to the substrate binding site. A divalent metal cation contacts are provided by His-98 and His-108. His-108 serves as the catalytic Proton donor. Asn-110–Arg-112 is a binding site for substrate. A divalent metal cation-binding residues include His-147 and His-177. Residues Tyr-242–Glu-277 are important for dimerization. Gly-260–Arg-262 lines the substrate pocket.

Belongs to the aerobic coproporphyrinogen-III oxidase family. In terms of assembly, homodimer. It depends on a divalent metal cation as a cofactor.

The protein resides in the cytoplasm. It carries out the reaction coproporphyrinogen III + O2 + 2 H(+) = protoporphyrinogen IX + 2 CO2 + 2 H2O. The protein operates within porphyrin-containing compound metabolism; protoporphyrin-IX biosynthesis; protoporphyrinogen-IX from coproporphyrinogen-III (O2 route): step 1/1. Its function is as follows. Involved in the heme biosynthesis. Catalyzes the aerobic oxidative decarboxylation of propionate groups of rings A and B of coproporphyrinogen-III to yield the vinyl groups in protoporphyrinogen-IX. This is Oxygen-dependent coproporphyrinogen-III oxidase from Aeromonas hydrophila subsp. hydrophila (strain ATCC 7966 / DSM 30187 / BCRC 13018 / CCUG 14551 / JCM 1027 / KCTC 2358 / NCIMB 9240 / NCTC 8049).